Here is a 53-residue protein sequence, read N- to C-terminus: UPF0391 membrane protein Bxeno_A1464 (53 aa).

The next 2 helical transmembrane spans lie at 5–25 (AAIFFIIAIIAAVFGFGGIAA) and 30–50 (IAKVLFFIFVVIFLVTLLMGV).

This sequence belongs to the UPF0391 family.

It is found in the cell membrane. This Paraburkholderia xenovorans (strain LB400) protein is UPF0391 membrane protein Bxeno_A1464.